An 848-amino-acid chain; its full sequence is Trimethylamine-N-oxide reductase 1 (848 aa).

A signal peptide (tat-type signal) is located at residues 1-39 (MNNNDLFQASRRRFLAQLGGLTVAGMLGTSLLTPRRATA). Ser-191 is a binding site for Mo-bis(molybdopterin guanine dinucleotide).

The protein belongs to the prokaryotic molybdopterin-containing oxidoreductase family. The cofactor is Mo-bis(molybdopterin guanine dinucleotide). In terms of processing, predicted to be exported by the Tat system. The position of the signal peptide cleavage has not been experimentally proven.

It localises to the periplasm. The enzyme catalyses trimethylamine + 2 Fe(III)-[cytochrome c] + H2O = trimethylamine N-oxide + 2 Fe(II)-[cytochrome c] + 3 H(+). Functionally, reduces trimethylamine-N-oxide (TMAO) into trimethylamine; an anaerobic reaction coupled to energy-yielding reactions. This is Trimethylamine-N-oxide reductase 1 (torA) from Escherichia coli O6:H1 (strain CFT073 / ATCC 700928 / UPEC).